A 316-amino-acid chain; its full sequence is Haloacid dehalogenase-like hydrolase domain-containing protein At4g39970 (316 aa).

A chloroplast-targeting transit peptide spans 1 to 46; sequence MAVSCNHSAILFSPSSTAGSSSVTSSSSLIGFPRFQTLRFKSRSVY. The active-site Nucleophile is the aspartate 69. 3 residues coordinate Mg(2+): aspartate 69, aspartate 71, and aspartate 259. Aspartate 71 acts as the Proton donor in catalysis.

This sequence belongs to the HAD-like hydrolase superfamily. DOG/GPP family. Mg(2+) is required as a cofactor.

It localises to the plastid. The protein resides in the chloroplast. The polypeptide is Haloacid dehalogenase-like hydrolase domain-containing protein At4g39970 (Arabidopsis thaliana (Mouse-ear cress)).